A 719-amino-acid chain; its full sequence is Protein lin-15A (719 aa).

Disordered regions lie at residues 179-199 (FSHF…EGSQ), 419-464 (YRDH…SISW), 559-626 (LTTA…PTKT), and 684-719 (AKQV…EPIF). Residues 570–579 (STSTDSSSSS) are compositionally biased toward low complexity. A compositionally biased stretch (polar residues) spans 604 to 617 (LLQNKPTHVESSSP). Residues 693-719 (EPKHIPPTHMEKKPEELLMDPKPEPIF) are compositionally biased toward basic and acidic residues.

Its subcellular location is the nucleus. In terms of biological role, synthetic multivulva (synMuv) class A protein. SynMuv proteins are required to repress the induction of vulval development. Acts redundantly with SynMuv class B protein lin-15B, and lin-35 to negatively regulate vulval development, most likely through antagonization of the Ras-signaling pathway. May also negatively regulate vulval development in association with other SynMuv class B proteins such as dpl-1 and efl-1. Regulates let-23 basal activity. Required for the correct expression and/or stability of lin-56. This is Protein lin-15A from Caenorhabditis elegans.